The sequence spans 466 residues: Alpha-1A adrenergic receptor (466 aa).

Residues 1–27 (MVLLSENASEGSNCTHPPAQVNISKAI) lie on the Extracellular side of the membrane. Asn-7, Asn-13, and Asn-22 each carry an N-linked (GlcNAc...) asparagine glycan. Residues 28 to 51 (LLGVILGGLIIFGVLGNILVILSV) form a helical membrane-spanning segment. Over 52–64 (ACHRHLHSVTHYY) the chain is Cytoplasmic. The helical transmembrane segment at 65–88 (IVNLAVADLLLTSTVLPFSAIFEI) threads the bilayer. At 89–99 (LGYWAFGRVFC) the chain is on the extracellular side. Cys-99 and Cys-176 form a disulfide bridge. Residues 100–122 (NIWAAVDVLCCTASIMGLCIISI) form a helical membrane-spanning segment. Over 123–143 (DRYIGVSYPLRYPTIVTQRRG) the chain is Cytoplasmic. A helical transmembrane segment spans residues 144–167 (VRALLCVWALSLVISIGPLFGWRQ). Topologically, residues 168 to 181 (QAPEDETICQINEE) are extracellular. Residues 182–205 (PGYVLFSALGSFYVPLTIILVMYC) traverse the membrane as a helical segment. The Cytoplasmic portion of the chain corresponds to 206-273 (RVYVVAKRES…FSREKKAAKT (68 aa)). A Phosphoserine; by PKA modification is found at Ser-215. The helical transmembrane segment at 274 to 297 (LGIVVGCFVLCWLPFFLVMPIGSF) threads the bilayer. At 298–305 (FPNFKPPE) the chain is on the extracellular side. Residues 306 to 329 (TVFKIVFWLGYLNSCINPIIYPCS) form a helical membrane-spanning segment. Residues 330–466 (SQEFKKAFQN…ISLGENGEEV (137 aa)) lie on the Cytoplasmic side of the membrane. A Nuclear localization signal motif is present at residues 334 to 349 (KKAFQNVLRIQCLRRR). A lipid anchor (S-palmitoyl cysteine) is attached at Cys-345.

The protein belongs to the G-protein coupled receptor 1 family. Adrenergic receptor subfamily. ADRA1A sub-subfamily. Homo- and heterooligomer. Heterooligomerizes with ADRA1B homooligomers in cardiac myocytes. Interacts with CAVIN4.

The protein localises to the nucleus membrane. It is found in the cell membrane. Its subcellular location is the cytoplasm. It localises to the membrane. The protein resides in the caveola. Its function is as follows. This alpha-adrenergic receptor mediates its action by association with G proteins that activate a phosphatidylinositol-calcium second messenger system. Its effect is mediated by G(q) and G(11) proteins. Nuclear ADRA1A-ADRA1B heterooligomers regulate phenylephrine (PE)-stimulated ERK signaling in cardiac myocytes. The protein is Alpha-1A adrenergic receptor (Adra1a) of Mus musculus (Mouse).